The chain runs to 329 residues: Quinone oxidoreductase (329 aa).

Alanine 2 carries the N-acetylalanine modification. Lysine 23 is subject to N6-acetyllysine. NADP(+) is bound by residues tyrosine 53, 158–161 (SGGV), glycine 181, histidine 200, asparagine 229, 246–249 (VGCR), and 269–271 (VSL). Lysine 296 carries the post-translational modification N6-succinyllysine.

It belongs to the zinc-containing alcohol dehydrogenase family. Quinone oxidoreductase subfamily. In terms of assembly, homotetramer.

The protein resides in the cytoplasm. It carries out the reaction 2 a quinone + NADPH + H(+) = 2 a 1,4-benzosemiquinone + NADP(+). In terms of biological role, does not have alcohol dehydrogenase activity. Binds NADP and acts through a one-electron transfer process. Orthoquinones, such as 1,2-naphthoquinone or 9,10-phenanthrenequinone, are the best substrates (in vitro). May act in the detoxification of xenobiotics. Interacts with (AU)-rich elements (ARE) in the 3'-UTR of target mRNA species and enhances their stability. NADPH binding interferes with mRNA binding. This is Quinone oxidoreductase (Cryz) from Rattus norvegicus (Rat).